The primary structure comprises 204 residues: ATP-dependent Clp protease proteolytic subunit (204 aa).

Serine 100 serves as the catalytic Nucleophile. The active site involves histidine 125.

Belongs to the peptidase S14 family. In terms of assembly, fourteen ClpP subunits assemble into 2 heptameric rings which stack back to back to give a disk-like structure with a central cavity, resembling the structure of eukaryotic proteasomes.

The protein localises to the cytoplasm. The enzyme catalyses Hydrolysis of proteins to small peptides in the presence of ATP and magnesium. alpha-casein is the usual test substrate. In the absence of ATP, only oligopeptides shorter than five residues are hydrolyzed (such as succinyl-Leu-Tyr-|-NHMec, and Leu-Tyr-Leu-|-Tyr-Trp, in which cleavage of the -Tyr-|-Leu- and -Tyr-|-Trp bonds also occurs).. Its function is as follows. Cleaves peptides in various proteins in a process that requires ATP hydrolysis. Has a chymotrypsin-like activity. Plays a major role in the degradation of misfolded proteins. This Anaeromyxobacter sp. (strain Fw109-5) protein is ATP-dependent Clp protease proteolytic subunit.